A 639-amino-acid polypeptide reads, in one-letter code: Protein argonaute (639 aa).

The tract at residues 1 to 100 is N-terminal domain; sequence MYLNLYKIDI…YIKKLFLDND (100 aa). The tract at residues 101–153 is linker L1; the sequence is FYFKKGNNFISNSEVFSLDSNENVNAHLTYKIKIHNISNEYYLSILPKFTFLS. The PAZ domain stretch occupies residues 154–209; sequence KEPALESAIKSGYLYNIKSGKSFPYISGLDGILKIDIGNNQIVEVAYPENYLFNFT. Residues 210-292 form a linker L2 region; it reads TRDAEKYGFS…KYSFYKNEQP (83 aa). The segment at 293 to 424 is mid domain; it reads LKAIFFFSSK…YVYKMGNFIP (132 aa). A PIWI domain region spans residues 425–639; it reads ECKPFILKKM…DYEWKLYIPY (215 aa). Active-site residues include Asp-446, Glu-482, Asp-516, and Asn-624. Mn(2+) is bound at residue Asp-446. 2 residues coordinate Mn(2+): Asp-516 and Asn-624.

Belongs to the argonaute family. Long pAgo subfamily. The cofactor is Mn(2+).

Its subcellular location is the cytoplasm. Functionally, an RNA-guided ssDNA endonuclease that may play a role in defense against invading mobile genetic elements. Uses short 5'-OH-ssRNA sequences as guides (gRNA) to bind complementary target DNA (tDNA) or target RNA resulting in target cleavage. The cleavage site is 10 nucleotides (nt) downstream of the target residue base-paired with the 5'-end of the gRNA. Reaction rates are fastest on 5'-OH-gRNA:tDNA followed by 5'-OH-gRNA:target RNA. gRNA between 17-21 nt supports equivalent rates of cleavage, has no preferred 5'-nt. Has weak activity on tDNA with 5'-phospho-gRNA, yielding products 1-2 nt longer. Unlike other characterized prokaryotic Ago proteins symmetric mismatches centered around the cleavage site reduce cleavage efficiency. The polypeptide is Protein argonaute (Marinitoga piezophila (strain DSM 14283 / JCM 11233 / KA3)).